The primary structure comprises 517 residues: Bifunctional purine biosynthesis protein PurH (517 aa).

The MGS-like domain occupies methionine 1–threonine 146.

Belongs to the PurH family.

It carries out the reaction (6R)-10-formyltetrahydrofolate + 5-amino-1-(5-phospho-beta-D-ribosyl)imidazole-4-carboxamide = 5-formamido-1-(5-phospho-D-ribosyl)imidazole-4-carboxamide + (6S)-5,6,7,8-tetrahydrofolate. The catalysed reaction is IMP + H2O = 5-formamido-1-(5-phospho-D-ribosyl)imidazole-4-carboxamide. It participates in purine metabolism; IMP biosynthesis via de novo pathway; 5-formamido-1-(5-phospho-D-ribosyl)imidazole-4-carboxamide from 5-amino-1-(5-phospho-D-ribosyl)imidazole-4-carboxamide (10-formyl THF route): step 1/1. The protein operates within purine metabolism; IMP biosynthesis via de novo pathway; IMP from 5-formamido-1-(5-phospho-D-ribosyl)imidazole-4-carboxamide: step 1/1. This is Bifunctional purine biosynthesis protein PurH from Prochlorococcus marinus (strain MIT 9313).